The following is a 278-amino-acid chain: Urease accessory protein UreD (278 aa).

Belongs to the UreD family. As to quaternary structure, ureD, UreF and UreG form a complex that acts as a GTP-hydrolysis-dependent molecular chaperone, activating the urease apoprotein by helping to assemble the nickel containing metallocenter of UreC. The UreE protein probably delivers the nickel.

The protein localises to the cytoplasm. In terms of biological role, required for maturation of urease via the functional incorporation of the urease nickel metallocenter. The chain is Urease accessory protein UreD from Deinococcus radiodurans (strain ATCC 13939 / DSM 20539 / JCM 16871 / CCUG 27074 / LMG 4051 / NBRC 15346 / NCIMB 9279 / VKM B-1422 / R1).